A 276-amino-acid polypeptide reads, in one-letter code: MHFHFSKMHGLGNDFMVVDCITQNVFFSQDLIRRLADRHTGVGFDQLLVVEAPYDPETDFHYRIFNADGSEVEQCGNGARCFARFVRLKGLTNKYSISVSTKKGKMILDVEDDGEVTVNMGVPEFEPNKIPFKAKQKEKTYIMRAGDKTLFCGAVSMGNPHVVTVVDDVDTADVDTLGPLLESHERFPERVNAGFMQVVSRDHIRLRVYERGAGETQACGSGACGAVAVGILQGLLDESVKVSLPGGELHISWQGPGKPLFMTGPATHVFDGQLSC.

Positions 13, 46, and 66 each coordinate substrate. C75 acts as the Proton donor in catalysis. Substrate is bound by residues 76-77 (GN), N159, N192, and 210-211 (ER). C219 serves as the catalytic Proton acceptor. A substrate-binding site is contributed by 220 to 221 (GS).

The protein belongs to the diaminopimelate epimerase family. As to quaternary structure, homodimer.

It localises to the cytoplasm. It catalyses the reaction (2S,6S)-2,6-diaminopimelate = meso-2,6-diaminopimelate. Its pathway is amino-acid biosynthesis; L-lysine biosynthesis via DAP pathway; DL-2,6-diaminopimelate from LL-2,6-diaminopimelate: step 1/1. Its function is as follows. Catalyzes the stereoinversion of LL-2,6-diaminopimelate (L,L-DAP) to meso-diaminopimelate (meso-DAP), a precursor of L-lysine and an essential component of the bacterial peptidoglycan. The protein is Diaminopimelate epimerase of Vibrio parahaemolyticus serotype O3:K6 (strain RIMD 2210633).